The primary structure comprises 544 residues: Inosine-5'-monophosphate dehydrogenase (544 aa).

CBS domains are found at residues 132 to 192 (FITD…PIKS) and 194 to 250 (MTTE…PYAS). Residues 288–290 (DSS) and 338–340 (GMG) contribute to the NAD(+) site. Residues glycine 340 and glycine 342 each contribute to the K(+) site. Serine 343 contributes to the IMP binding site. Residue cysteine 345 participates in K(+) binding. The Thioimidate intermediate role is filled by cysteine 345. IMP-binding positions include 378-380 (DGG), 401-402 (GG), and 425-429 (YRGMG). Arginine 458 functions as the Proton acceptor in the catalytic mechanism. Position 470 (glutamine 470) interacts with IMP. Glutamate 529, glycine 530, and glycine 531 together coordinate K(+).

The protein belongs to the IMPDH/GMPR family. Homotetramer. Requires K(+) as cofactor.

Its subcellular location is the cytoplasm. It carries out the reaction IMP + NAD(+) + H2O = XMP + NADH + H(+). Its pathway is purine metabolism; XMP biosynthesis via de novo pathway; XMP from IMP: step 1/1. Its activity is regulated as follows. Mycophenolic acid (MPA) is a non-competitive inhibitor that prevents formation of the closed enzyme conformation by binding to the same site as the amobile flap. In contrast, mizoribine monophosphate (MZP) is a competitive inhibitor that induces the closed conformation. MPA is a potent inhibitor of mammalian IMPDHs but a poor inhibitor of the bacterial enzymes. MZP is a more potent inhibitor of bacterial IMPDH. Its function is as follows. Catalyzes the conversion of inosine 5'-phosphate (IMP) to xanthosine 5'-phosphate (XMP), the first committed and rate-limiting step in the de novo synthesis of guanine nucleotides, and therefore plays an important role in the regulation of cell growth. The chain is Inosine-5'-monophosphate dehydrogenase from Cryptococcus neoformans var. neoformans serotype D (strain JEC21 / ATCC MYA-565) (Filobasidiella neoformans).